A 268-amino-acid chain; its full sequence is Zinc finger protein SNAI2 (268 aa).

Residues 1–20 (MPRSFLVKKHFNASKKPNYS) form an SNAG domain region. Residues 84–116 (GRVSPLPSSDTSSKDHSGSESPISDEEERLQPK) form a disordered region. 4 C2H2-type zinc fingers span residues 128–150 (FQCN…KQLH), 159–181 (FSCK…IRTH), 185–207 (CVCK…IRTH), and 213–235 (FSCP…LQTH). Residues 241-264 (YQCKNCSKTFSRMSLLHKHEESGC) form a C2H2-type 5; atypical zinc finger.

The protein belongs to the snail C2H2-type zinc-finger protein family. Interacts (via SNAG domain) with LIMD1 (via LIM domains), WTIP (via LIM domains) and AJUBA (via LIM domains). Interacts (via zinc fingers) with KPNA2, KPNB1 and TNPO1. May interact (via zinc fingers) with IPO7. Post-translationally, phosphorylated by GSK3B. Once phosphorylated, it becomes a target for ubiquitination. In terms of processing, ubiquitinated by the SCF(FBXO11) complex; ubiquitination requires previous GSK3B-mediated SNAI2 phosphorylation.

The protein localises to the nucleus. Its subcellular location is the cytoplasm. Functionally, transcriptional repressor that modulates both activator-dependent and basal transcription. Involved in the generation and migration of neural crest cells. Plays a role in mediating RAF1-induced transcriptional repression of the TJ protein, occludin (OCLN) and subsequent oncogenic transformation of epithelial cells. Represses BRCA2 expression by binding to its E2-box-containing silencer and recruiting CTBP1 and HDAC1 in breast cells. In epidermal keratinocytes, binds to the E-box in ITGA3 promoter and represses its transcription. Involved in the regulation of ITGB1 and ITGB4 expression and cell adhesion and proliferation in epidermal keratinocytes. Binds to E-box2 domain of BSG and activates its expression during TGFB1-induced epithelial-mesenchymal transition (EMT) in hepatocytes. Represses E-Cadherin/CDH1 transcription via E-box elements. Involved in osteoblast maturation. Binds to RUNX2 and SOC9 promoters and may act as a positive and negative transcription regulator, respectively, in osteoblasts. Binds to CXCL12 promoter via E-box regions in mesenchymal stem cells and osteoblasts. Plays an essential role in TWIST1-induced EMT and its ability to promote invasion and metastasis. This is Zinc finger protein SNAI2 (Snai2) from Rattus norvegicus (Rat).